The sequence spans 160 residues: 6,7-dimethyl-8-ribityllumazine synthase (160 aa).

Residues tryptophan 27, alanine 59–glutamate 61, and valine 81–isoleucine 83 contribute to the 5-amino-6-(D-ribitylamino)uracil site. Glutamate 86 to threonine 87 is a (2S)-2-hydroxy-3-oxobutyl phosphate binding site. The Proton donor role is filled by histidine 89. Asparagine 114 contacts 5-amino-6-(D-ribitylamino)uracil. Arginine 128 is a binding site for (2S)-2-hydroxy-3-oxobutyl phosphate.

Belongs to the DMRL synthase family. As to quaternary structure, homopentamer.

The catalysed reaction is (2S)-2-hydroxy-3-oxobutyl phosphate + 5-amino-6-(D-ribitylamino)uracil = 6,7-dimethyl-8-(1-D-ribityl)lumazine + phosphate + 2 H2O + H(+). It participates in cofactor biosynthesis; riboflavin biosynthesis; riboflavin from 2-hydroxy-3-oxobutyl phosphate and 5-amino-6-(D-ribitylamino)uracil: step 1/2. Functionally, catalyzes the formation of 6,7-dimethyl-8-ribityllumazine by condensation of 5-amino-6-(D-ribitylamino)uracil with 3,4-dihydroxy-2-butanone 4-phosphate. This is the penultimate step in the biosynthesis of riboflavin. In Mycobacterium ulcerans (strain Agy99), this protein is 6,7-dimethyl-8-ribityllumazine synthase.